A 106-amino-acid chain; its full sequence is NADH-quinone oxidoreductase subunit K (106 aa).

3 consecutive transmembrane segments (helical) span residues 8 to 28 (IGIENYIFLSVVLFCIGVFGV), 35 to 55 (IIVFMSIEIMLNAVNLLFVAF), and 66 to 86 (VFVFFSMAVAAAEVAVGLAIL).

Belongs to the complex I subunit 4L family. NDH-1 is composed of 14 different subunits. Subunits NuoA, H, J, K, L, M, N constitute the membrane sector of the complex.

Its subcellular location is the cell inner membrane. It catalyses the reaction a quinone + NADH + 5 H(+)(in) = a quinol + NAD(+) + 4 H(+)(out). NDH-1 shuttles electrons from NADH, via FMN and iron-sulfur (Fe-S) centers, to quinones in the respiratory chain. The immediate electron acceptor for the enzyme in this species is believed to be a menaquinone. Couples the redox reaction to proton translocation (for every two electrons transferred, four hydrogen ions are translocated across the cytoplasmic membrane), and thus conserves the redox energy in a proton gradient. This is NADH-quinone oxidoreductase subunit K from Flavobacterium johnsoniae (strain ATCC 17061 / DSM 2064 / JCM 8514 / BCRC 14874 / CCUG 350202 / NBRC 14942 / NCIMB 11054 / UW101) (Cytophaga johnsonae).